A 202-amino-acid polypeptide reads, in one-letter code: NAD(P)H-quinone oxidoreductase subunit I (202 aa).

4Fe-4S ferredoxin-type domains follow at residues 55–84 (GRIH…VDWV) and 95–124 (KNYS…MTEE). Positions 64, 67, 70, 74, 104, 107, 110, and 114 each coordinate [4Fe-4S] cluster. Residues 168–187 (EYDPHVVPSDRPRAGQRPEE) show a composition bias toward basic and acidic residues. The interval 168–202 (EYDPHVVPSDRPRAGQRPEELVDQYKQAAAANEEN) is disordered.

It belongs to the complex I 23 kDa subunit family. As to quaternary structure, NDH-1 is composed of at least 11 different subunits. [4Fe-4S] cluster serves as cofactor.

The protein resides in the cellular thylakoid membrane. It carries out the reaction a plastoquinone + NADH + (n+1) H(+)(in) = a plastoquinol + NAD(+) + n H(+)(out). The enzyme catalyses a plastoquinone + NADPH + (n+1) H(+)(in) = a plastoquinol + NADP(+) + n H(+)(out). In terms of biological role, NDH-1 shuttles electrons from an unknown electron donor, via FMN and iron-sulfur (Fe-S) centers, to quinones in the respiratory and/or the photosynthetic chain. The immediate electron acceptor for the enzyme in this species is believed to be plastoquinone. Couples the redox reaction to proton translocation, and thus conserves the redox energy in a proton gradient. The chain is NAD(P)H-quinone oxidoreductase subunit I from Synechococcus elongatus (strain ATCC 33912 / PCC 7942 / FACHB-805) (Anacystis nidulans R2).